Here is a 515-residue protein sequence, read N- to C-terminus: Thioredoxin domain-containing protein 2 (515 aa).

The tract at residues 1 to 23 is disordered; sequence MTLNNGGKANERGSNENPLQALS. Residues S14 and S39 each carry the phosphoserine modification. The segment at 51-390 is disordered; sequence TLHMSTEESE…NTIKSSEEDV (340 aa). 2 stretches are compositionally biased toward polar residues: residues 61 to 75 and 85 to 136; these read FPQQ…SENT and KPSS…TNST. 21 repeat units span residues 92–106, 107–121, 122–136, 137–151, 152–166, 167–181, 182–196, 197–211, 212–226, 227–241, 242–256, 257–271, 272–286, 287–301, 302–316, 317–331, 332–346, 347–362, 363–375, 376–390, and 391–405. Residues 92-405 are 21 X 15 AA approximate tandem repeat of Q-P-K-X-G-D-I-P-K-S-[PS]-E-[KE]-X-I; the sequence is QLKQENISKS…KLLGLGAEIE (314 aa). 2 stretches are compositionally biased toward basic and acidic residues: residues 137–293 and 302–358; these read HYRE…ETKV and QSKE…KSPE. Position 146 is a phosphoserine (S146). Over residues 375-384 the composition is skewed to polar residues; it reads IQSQEGNTIK. Residues 398–515 form the Thioredoxin domain; sequence LGLGAEIETL…KLERSISELK (118 aa). C442 and C445 form a disulfide bridge.

Testis-specific. Strongly expressed in the testicular seminiferous tubules, mostly in the round spermatids.

It localises to the cytoplasm. In terms of biological role, probably plays a regulatory role in sperm development. May participate in regulation of fibrous sheath (FS) assembly by supporting the formation of disulfide bonds during sperm tail morphogenesis. May also be required to rectify incorrect disulfide pairing and generate suitable pairs between the FS constituents. Can reduce disulfide bonds in vitro in the presence of NADP and thioredoxin reductase. The chain is Thioredoxin domain-containing protein 2 (Txndc2) from Mus musculus (Mouse).